Here is an 841-residue protein sequence, read N- to C-terminus: Probable alpha-glucuronidase A (841 aa).

The N-terminal stretch at methionine 1–alanine 19 is a signal peptide. N-linked (GlcNAc...) asparagine glycans are attached at residues asparagine 50, asparagine 104, asparagine 223, asparagine 280, asparagine 311, asparagine 344, asparagine 466, asparagine 528, asparagine 577, asparagine 683, asparagine 724, and asparagine 733.

Belongs to the glycosyl hydrolase 67 family.

The protein localises to the secreted. It catalyses the reaction an alpha-D-glucuronoside + H2O = D-glucuronate + an alcohol. In terms of biological role, alpha-glucuronidase involved in the hydrolysis of xylan, a major structural heterogeneous polysaccharide found in plant biomass representing the second most abundant polysaccharide in the biosphere, after cellulose. Releases 4-O-methylglucuronic acid from xylan. This chain is Probable alpha-glucuronidase A (aguA), found in Aspergillus terreus (strain NIH 2624 / FGSC A1156).